Consider the following 170-residue polypeptide: Superoxide dismutase [Fe] (170 aa).

Residues His27, His81, Asp163, and His167 each contribute to the Fe cation site.

It belongs to the iron/manganese superoxide dismutase family. In terms of assembly, homodimer. It depends on Fe cation as a cofactor.

It carries out the reaction 2 superoxide + 2 H(+) = H2O2 + O2. In terms of biological role, destroys superoxide anion radicals which are normally produced within the cells and which are toxic to biological systems. This chain is Superoxide dismutase [Fe] (sodA), found in Raoultella planticola (Klebsiella planticola).